The primary structure comprises 934 residues: Desmocollin 2-like protein (934 aa).

Cadherin domains are found at residues 167–274 (RWRP…APEF), 274–381 (FTGN…PPTF), 382–494 (KEKL…GPEF), and 495–600 (NPNI…IPVI). At 167-716 (RWRPLPFSVV…SASVSLGNYG (550 aa)) the chain is on the extracellular side. Asn-197, Asn-296, and Asn-316 each carry an N-linked (GlcNAc...) asparagine glycan. N-linked (GlcNAc...) asparagine glycosylation is found at Asn-509, Asn-565, and Asn-569. Residues 717–737 (ILALVLSGLLLLLLCLFLIFF) form a helical membrane-spanning segment. Residues 738–934 (CTTKRDKLQI…ICYTTNKTGK (197 aa)) lie on the Cytoplasmic side of the membrane.

In terms of tissue distribution, expressed at low levels in the brain and heart.

The protein localises to the cell junction. It localises to the desmosome. The protein resides in the cell membrane. Its function is as follows. A component of desmosome cell-cell junctions which are required for positive regulation of cellular adhesion. Involved in the interaction of plaque proteins and intermediate filaments mediating cell-cell adhesion. Involved in the formation and structural organization of desmosome cell-cell junctions during embryonic development. Required for embryogenesis, specifically for progression of epiboly and normal convergence-extension movements during gastrulation. Required for the development of desmosomal-rich midlines in the heart. Plays an important role in ventricular contraction and resulting heart stroke volume. In Danio rerio (Zebrafish), this protein is Desmocollin 2-like protein.